The sequence spans 156 residues: Small ribosomal subunit protein uS7 (156 aa).

This sequence belongs to the universal ribosomal protein uS7 family. Part of the 30S ribosomal subunit. Contacts proteins S9 and S11.

Its function is as follows. One of the primary rRNA binding proteins, it binds directly to 16S rRNA where it nucleates assembly of the head domain of the 30S subunit. Is located at the subunit interface close to the decoding center, probably blocks exit of the E-site tRNA. This is Small ribosomal subunit protein uS7 from Pseudomonas aeruginosa (strain LESB58).